We begin with the raw amino-acid sequence, 542 residues long: CTP synthase (542 aa).

The segment at 1–265 is amidoligase domain; the sequence is MARYIFITGG…DQEVLAAFGI (265 aa). Ser13 lines the CTP pocket. Ser13 contacts UTP. Residue 14 to 19 coordinates ATP; sequence SLGKGL. Tyr54 contacts L-glutamine. Asp71 lines the ATP pocket. 2 residues coordinate Mg(2+): Asp71 and Glu139. CTP is bound by residues 146–148, 186–191, and Lys222; these read DIE and KTKPTQ. UTP contacts are provided by residues 186–191 and Lys222; that span reads KTKPTQ. 238–240 is a binding site for ATP; the sequence is RDV. The Glutamine amidotransferase type-1 domain occupies 291–541; that stretch reads TIAIVGKYTG…IAAALEQSRL (251 aa). Gly353 provides a ligand contact to L-glutamine. Cys380 acts as the Nucleophile; for glutamine hydrolysis in catalysis. L-glutamine is bound by residues 381–384, Glu404, and Arg469; that span reads FGMQ. Catalysis depends on residues His514 and Glu516.

Belongs to the CTP synthase family. As to quaternary structure, homotetramer.

The catalysed reaction is UTP + L-glutamine + ATP + H2O = CTP + L-glutamate + ADP + phosphate + 2 H(+). It catalyses the reaction L-glutamine + H2O = L-glutamate + NH4(+). The enzyme catalyses UTP + NH4(+) + ATP = CTP + ADP + phosphate + 2 H(+). Its pathway is pyrimidine metabolism; CTP biosynthesis via de novo pathway; CTP from UDP: step 2/2. Its activity is regulated as follows. Allosterically activated by GTP, when glutamine is the substrate; GTP has no effect on the reaction when ammonia is the substrate. The allosteric effector GTP functions by stabilizing the protein conformation that binds the tetrahedral intermediate(s) formed during glutamine hydrolysis. Inhibited by the product CTP, via allosteric rather than competitive inhibition. In terms of biological role, catalyzes the ATP-dependent amination of UTP to CTP with either L-glutamine or ammonia as the source of nitrogen. Regulates intracellular CTP levels through interactions with the four ribonucleotide triphosphates. This is CTP synthase from Methylocella silvestris (strain DSM 15510 / CIP 108128 / LMG 27833 / NCIMB 13906 / BL2).